We begin with the raw amino-acid sequence, 660 residues long: RalBP1-associated Eps domain-containing protein 2 (660 aa).

An EH 1 domain is found at 34–147; it reads EQQCYSELFA…RFMMSKNDGE (114 aa). The segment at 169–208 is disordered; sequence EKNSFKRMDDEDKQQETQSPTMSPLASPPSSPPHYQRVPL. Phosphoserine is present on S254. The region spanning 282 to 373 is the EH 2 domain; sequence QREYYVNQFR…LQPEYLQAAF (92 aa). One can recognise an EF-hand domain in the interval 315–350; that stretch reads LSIPELSYIWELSDADCDGALTLPEFCAAFHLIVAR. Ca(2+) is bound by residues D328, D330, D332, and E339. The segment at 433–616 is disordered; that stretch reads NEALPKDVSE…KQKKAIQTAI (184 aa). Residue T479 is modified to Phosphothreonine. A Phosphoserine modification is found at S493. Residues 512-523 are compositionally biased toward pro residues; that stretch reads LPPPPALPPRPC. Residues 514-660 are interaction with RALBP1; it reads PPPALPPRPC…LEQLRPVTVL (147 aa). Residues 561–660 are interaction with ASAP1; it reads PPSKPIRRKF…LEQLRPVTVL (100 aa). Residues 582–594 show a composition bias toward low complexity; the sequence is PSTAASGPASAAT. A coiled-coil region spans residues 601–657; it reads VQKQSSKQKKAIQTAIRKNKEANAVLARLNSELQQQLKEVHQERIALENQLEQLRPV.

In terms of assembly, interacts with EPN1; the interaction is direct. Interacts with EPS15; the interaction is direct. Interacts with EPS15L1. Interacts with RALBP1; can form a ternary complex with activated Ral (RALA or RALB). Interacts with ASAP1; the interaction is direct and this complex can bind paxillin. Also forms a ternary complex with RALBP1 and ASAP1. Interacts with GRB2. Post-translationally, tyrosine-phosphorylated upon stimulation of cells with EGF. Phosphorylation on Tyr-residues induces its association with the EGF receptor probably indirectly through an adapter like GRB2. As to expression, expressed at high levels in the cerebrum, cerebellum, lung, kidney, and testis. Weakly expressed in the kidney. Isoform 2 is down-regulated during progression of prostate cancer.

It is found in the cytoplasm. Involved in ligand-dependent receptor mediated endocytosis of the EGF and insulin receptors as part of the Ral signaling pathway. By controlling growth factor receptors endocytosis may regulate cell survival. Through ASAP1 may regulate cell adhesion and migration. In Homo sapiens (Human), this protein is RalBP1-associated Eps domain-containing protein 2 (REPS2).